A 62-amino-acid chain; its full sequence is Short neurotoxin C (62 aa).

Over residues 1 to 16 the composition is skewed to polar residues; sequence RRCFNQQSSQPQTNKS. Residues 1–21 are disordered; the sequence is RRCFNQQSSQPQTNKSCPPGE. 4 cysteine pairs are disulfide-bonded: C3–C24, C17–C41, C43–C54, and C55–C60.

This sequence belongs to the three-finger toxin family. Short-chain subfamily. Type I alpha-neurotoxin sub-subfamily. Expressed by the venom gland.

Its subcellular location is the secreted. Its function is as follows. Binds to muscle nicotinic acetylcholine receptor (nAChR) and inhibit acetylcholine from binding to the receptor, thereby impairing neuromuscular transmission. This chain is Short neurotoxin C, found in Laticauda crockeri (Crocker's sea snake).